The sequence spans 392 residues: Succinate--CoA ligase [ADP-forming] subunit beta (392 aa).

Residues 9 to 248 form the ATP-grasp domain; the sequence is KDILKKFGVS…TNEEDPFEVE (240 aa). Residues Lys-50, 57-59, Glu-103, Met-106, and Glu-111 contribute to the ATP site; that span reads GRG. Positions 203 and 217 each coordinate Mg(2+). Substrate contacts are provided by residues Asn-268 and 325-327; that span reads GIV.

It belongs to the succinate/malate CoA ligase beta subunit family. As to quaternary structure, heterotetramer of two alpha and two beta subunits. Mg(2+) is required as a cofactor.

The catalysed reaction is succinate + ATP + CoA = succinyl-CoA + ADP + phosphate. The enzyme catalyses GTP + succinate + CoA = succinyl-CoA + GDP + phosphate. It participates in carbohydrate metabolism; tricarboxylic acid cycle; succinate from succinyl-CoA (ligase route): step 1/1. Functionally, succinyl-CoA synthetase functions in the citric acid cycle (TCA), coupling the hydrolysis of succinyl-CoA to the synthesis of either ATP or GTP and thus represents the only step of substrate-level phosphorylation in the TCA. The beta subunit provides nucleotide specificity of the enzyme and binds the substrate succinate, while the binding sites for coenzyme A and phosphate are found in the alpha subunit. The protein is Succinate--CoA ligase [ADP-forming] subunit beta of Chlorobium limicola (strain DSM 245 / NBRC 103803 / 6330).